A 182-amino-acid polypeptide reads, in one-letter code: Ribosome maturation factor RimM (182 aa).

The PRC barrel domain occupies 106 to 179 (EGEFHVLDLI…RIEITPPPGL (74 aa)).

This sequence belongs to the RimM family. In terms of assembly, binds ribosomal protein uS19.

Its subcellular location is the cytoplasm. Its function is as follows. An accessory protein needed during the final step in the assembly of 30S ribosomal subunit, possibly for assembly of the head region. Essential for efficient processing of 16S rRNA. May be needed both before and after RbfA during the maturation of 16S rRNA. It has affinity for free ribosomal 30S subunits but not for 70S ribosomes. The protein is Ribosome maturation factor RimM of Synechococcus elongatus (strain ATCC 33912 / PCC 7942 / FACHB-805) (Anacystis nidulans R2).